The chain runs to 462 residues: Integrator complex subunit 12 (462 aa).

Positions 39 to 132 (LARGIDSSYR…PETRSSPITV (94 aa)) are disordered. The span at 59–86 (ISSTKTVSVKQEPKTSSSLPSGNNNGKV) shows a compositional bias: polar residues. K68 is covalently cross-linked (Glycyl lysine isopeptide (Lys-Gly) (interchain with G-Cter in SUMO2)). Over residues 88–125 (TTEKVKKEGEKRPADKMKSDITEGADVPKKPRLEKPET) the composition is skewed to basic and acidic residues. S128 bears the Phosphoserine mark. A PHD-type zinc finger spans residues 159-215 (GLACVVCRQMTVASGNQLVECQECHNLYHQDCHKPQVTDKEVTDPRLVWYCARCTRQ). K254 is covalently cross-linked (Glycyl lysine isopeptide (Lys-Gly) (interchain with G-Cter in SUMO2)). Polar residues predominate over residues 305 to 328 (PSTAKLSSAAQNNSGKPATSSANQ). Residues 305–462 (PSTAKLSSAA…KKAAQKKLKK (158 aa)) form a disordered region. Composition is skewed to low complexity over residues 347–358 (KIGSSNSTSPTV) and 382–431 (VSKV…PSAS). Residues 434–443 (GPTSQESQLN) are compositionally biased toward polar residues. The segment covering 449 to 462 (QMVKKKAAQKKLKK) has biased composition (basic residues).

It belongs to the Integrator subunit 12 family. Component of the Integrator complex, composed of core subunits INTS1, INTS2, INTS3, INTS4, INTS5, INTS6, INTS7, INTS8, INTS9/RC74, INTS10, INTS11/CPSF3L, INTS12, INTS13, INTS14 and INTS15. The core complex associates with protein phosphatase 2A subunits PPP2CA and PPP2R1A, to form the Integrator-PP2A (INTAC) complex. Post-translationally, dephosphorylated at Ser-128 by the PNUTS-PP1 complex, promoting RNA polymerase II transcription pause-release.

It is found in the nucleus. Component of the integrator complex, a multiprotein complex that terminates RNA polymerase II (Pol II) transcription in the promoter-proximal region of genes. The integrator complex provides a quality checkpoint during transcription elongation by driving premature transcription termination of transcripts that are unfavorably configured for transcriptional elongation: the complex terminates transcription by (1) catalyzing dephosphorylation of the C-terminal domain (CTD) of Pol II subunit POLR2A/RPB1 and SUPT5H/SPT5, (2) degrading the exiting nascent RNA transcript via endonuclease activity and (3) promoting the release of Pol II from bound DNA. The integrator complex is also involved in terminating the synthesis of non-coding Pol II transcripts, such as enhancer RNAs (eRNAs), small nuclear RNAs (snRNAs), telomerase RNAs and long non-coding RNAs (lncRNAs). Mediates recruitment of cytoplasmic dynein to the nuclear envelope, probably as component of the integrator complex. This Bos taurus (Bovine) protein is Integrator complex subunit 12 (INTS12).